The sequence spans 77 residues: MESFFNNTFATLIAYIGIIFTYLLVIPLLLFYWMNNRWNIMGKFERLGIYGLVFLFFPGLILFSPFLNLRLKGSGKG.

Helical transmembrane passes span Leu12 to Tyr32 and Leu47 to Leu67.

The protein belongs to the complex I NdhL subunit family. In terms of assembly, NDH-1 can be composed of about 15 different subunits; different subcomplexes with different compositions have been identified which probably have different functions.

The protein localises to the cellular thylakoid membrane. The enzyme catalyses a plastoquinone + NADH + (n+1) H(+)(in) = a plastoquinol + NAD(+) + n H(+)(out). It catalyses the reaction a plastoquinone + NADPH + (n+1) H(+)(in) = a plastoquinol + NADP(+) + n H(+)(out). Its function is as follows. NDH-1 shuttles electrons from an unknown electron donor, via FMN and iron-sulfur (Fe-S) centers, to quinones in the respiratory and/or the photosynthetic chain. The immediate electron acceptor for the enzyme in this species is believed to be plastoquinone. Couples the redox reaction to proton translocation, and thus conserves the redox energy in a proton gradient. Cyanobacterial NDH-1 also plays a role in inorganic carbon-concentration. The chain is NAD(P)H-quinone oxidoreductase subunit L from Prochlorococcus marinus (strain AS9601).